Consider the following 436-residue polypeptide: MAKIVKVIGREIIDSRGNPTVEAEVHLEGGFVGLAAAPSGASTGSREALELRDGDKSRFLGKGVLKAVAAVNNEIAQAIVGKDATNQAEIDQIMIDLDGTENKSNFGANAILAVSLANAKAAAASKGLPLYAYIAELNGSAGVYSMPLPMMNIINGGEHADNNVDIQEFMIQPVGAKTLREALRIGAEVFHNLAKVLKAKGMSTAVGDEGGFAPNLASNADALACIKEAVEKAGYVLGKDVTLAMDCASSEFYNKENGMYEMKGEGKSFTSQEFTHYLEELTKQYPIVSIEDGQDESDWEGFAYQTKVLGDRVQLVGDDLFVTNTKILKEGIEKGIANSILIKFNQIGSLTETLAAIKMAKDAGYTAVISHRSGETEDATIADLAVGTAAGQIKTGSMSRSDRIAKYNQLIRIEEALERAGTPAAFPGLKAVKGQA.

Glutamine 167 is a binding site for (2R)-2-phosphoglycerate. The active-site Proton donor is the glutamate 209. Positions 246, 291, and 318 each coordinate Mg(2+). (2R)-2-phosphoglycerate contacts are provided by lysine 343, arginine 372, serine 373, and lysine 394. The active-site Proton acceptor is lysine 343.

It belongs to the enolase family. In terms of assembly, component of the RNA degradosome, a multiprotein complex involved in RNA processing and mRNA degradation. Mg(2+) serves as cofactor.

It is found in the cytoplasm. Its subcellular location is the secreted. The protein localises to the cell surface. It catalyses the reaction (2R)-2-phosphoglycerate = phosphoenolpyruvate + H2O. It functions in the pathway carbohydrate degradation; glycolysis; pyruvate from D-glyceraldehyde 3-phosphate: step 4/5. In terms of biological role, catalyzes the reversible conversion of 2-phosphoglycerate (2-PG) into phosphoenolpyruvate (PEP). It is essential for the degradation of carbohydrates via glycolysis. This Haemophilus influenzae (strain PittEE) protein is Enolase.